The following is a 25-amino-acid chain: Fructokinase-1 (25 aa).

The protein belongs to the ROK (NagC/XylR) family. Homodimer. Requires Mg(2+) as cofactor.

The catalysed reaction is D-fructose + ATP = D-fructose 6-phosphate + ADP + H(+). Inhibition by zinc ions (Potential). Inactivated by EDTA. This Lactococcus lactis subsp. lactis (Streptococcus lactis) protein is Fructokinase-1.